A 357-amino-acid chain; its full sequence is MSQSGKNGLTYSDAGVDIDNGNLLVEKIKPAVRSTRRPGADGEIGGFGGLFDLKAAGFTDPVLVAANDGVGTKLKIAIDADYHDTVGIDLVAMCVNDLVVQGAEPLFFLDYFATGKLVPDQGAAIVGGIAAGCREAGCALIGGETAEMPGMYSSGDYDLAGFAVGAAERGKLLPSGDIAEGDVILGLASSGVHSNGFSLVRKIVELSGLGWDAPAPFAEGKKLGEALLEPTRIYVKPLLKAIRETGALKALAHITGGGFPENIPRVLPEHLAAEIDLGAVKVPPVFSWLARTGGVEAKEMLRTFNCGIGMIVVVAEENVAAVSKALEAEGEKVVTLGRMIARAEGAAGTVYKGTLAI.

The protein belongs to the AIR synthase family.

The protein resides in the cytoplasm. It carries out the reaction 2-formamido-N(1)-(5-O-phospho-beta-D-ribosyl)acetamidine + ATP = 5-amino-1-(5-phospho-beta-D-ribosyl)imidazole + ADP + phosphate + H(+). Its pathway is purine metabolism; IMP biosynthesis via de novo pathway; 5-amino-1-(5-phospho-D-ribosyl)imidazole from N(2)-formyl-N(1)-(5-phospho-D-ribosyl)glycinamide: step 2/2. The polypeptide is Phosphoribosylformylglycinamidine cyclo-ligase (Rhizobium etli (strain ATCC 51251 / DSM 11541 / JCM 21823 / NBRC 15573 / CFN 42)).